The following is a 213-amino-acid chain: Ras-related protein Rab-4A (213 aa).

GTP-binding residues include glycine 18, threonine 19, glycine 20, lysine 21, serine 22, cysteine 23, serine 37, histidine 39, and threonine 40. Serine 22 is a binding site for Mg(2+). A Switch 1 motif is present at residues 39–44 (HTIGVE). Mg(2+)-binding residues include threonine 40 and aspartate 63. The Switch 2 signature appears at 65–74 (AGQERFRSVT). Residues glycine 66, asparagine 121, lysine 122, aspartate 124, alanine 152, and leucine 153 each contribute to the GTP site. 2 S-geranylgeranyl cysteine lipidation sites follow: cysteine 211 and cysteine 213. Cysteine 213 carries the cysteine methyl ester modification.

It belongs to the small GTPase superfamily. Rab family. Requires Mg(2+) as cofactor.

It localises to the membrane. Its subcellular location is the cytoplasm. It is found in the early endosome membrane. The protein resides in the recycling endosome membrane. The catalysed reaction is GTP + H2O = GDP + phosphate + H(+). With respect to regulation, regulated by guanine nucleotide exchange factors (GEFs) which promote the exchange of bound GDP for free GTP. Regulated by GTPase activating proteins (GAPs) which increase the GTP hydrolysis activity. Inhibited by GDP dissociation inhibitors (GDIs). In terms of biological role, the small GTPases Rab are key regulators of intracellular membrane trafficking, from the formation of transport vesicles to their fusion with membranes. Rabs cycle between an inactive GDP-bound form and an active GTP-bound form that is able to recruit to membranes different sets of downstream effectors directly responsible for vesicle formation, movement, tethering and fusion. RAB4A is involved in protein transport. Also plays a role in vesicular traffic. Mediates VEGFR2 endosomal trafficking to enhance VEGFR2 signaling. Acts as a regulator of platelet alpha-granule release during activation and aggregation of platelets. The chain is Ras-related protein Rab-4A (rab4a) from Danio rerio (Zebrafish).